The following is a 2206-amino-acid chain: Genome polyprotein (2206 aa).

The N-myristoyl glycine; by host moiety is linked to residue Gly-2. Over 2-1517 the chain is Cytoplasmic; the sequence is GAQVSSQKVG…NINRAMTILQ (1516 aa). Amphipathic alpha-helix stretches follow at residues 579 to 599 and 579 to 603; these read GIED…LPKQ and GIED…QDSL. Residues His-898 and Asp-916 each act as for protease 2A activity in the active site. Zn(2+) is bound by residues Cys-933 and Cys-935. The For protease 2A activity role is filled by Cys-987. Positions 993 and 995 each coordinate Zn(2+). The tract at residues 1125-1197 is membrane-binding; that stretch reads GDSWLKKFTE…HQSCPSQEHQ (73 aa). Positions 1125 to 1263 are oligomerization; that stretch reads GDSWLKKFTE…SPGTGKSVAT (139 aa). The interval 1146–1150 is RNA-binding; it reads SNKIS. The region spanning 1229 to 1385 is the SF3 helicase domain; that stretch reads EHTINNYIQF…GEYSRDGKLN (157 aa). 1253–1260 is an ATP binding site; sequence GSPGTGKS. Positions 1393, 1396, 1405, and 1410 each coordinate Zn(2+). Residues 1393 to 1410 form a C4-type zinc finger; that stretch reads CKDCHQPANFKRCCPLVC. The segment at 1437-1444 is RNA-binding; that stretch reads ERNRRSNI. The interval 1448–1453 is oligomerization; it reads MEALFQ. The stretch at 1518-1533 is an intramembrane region; that stretch reads AVTTFAAVAGVVYVMY. Over 1534–2206 the chain is Cytoplasmic; sequence KLFAGHQGAY…TLYRRWLDSF (673 aa). Residue Tyr-1543 is modified to O-(5'-phospho-RNA)-tyrosine. In terms of domain architecture, Peptidase C3 spans 1563–1741; sequence GPGFDYAVAM…FAAALKRSYF (179 aa). Active-site for protease 3C activity residues include His-1602, Glu-1633, and Cys-1709. A RdRp catalytic domain is found at 1972–2087; it reads EKLFAFDYTG…SYPHEVDASL (116 aa). 2 residues coordinate Mg(2+): Asp-1978 and Asp-2073.

It belongs to the picornaviruses polyprotein family. As to quaternary structure, interacts with capsid protein VP1 and capsid protein VP3 to form heterotrimeric protomers. In terms of assembly, interacts with capsid protein VP0, and capsid protein VP3 to form heterotrimeric protomers. Interacts with human PVR. Five protomers subsequently associate to form pentamers which serve as building blocks for the capsid. Interacts with capsid protein VP2, capsid protein VP3 and capsid protein VP4 following cleavage of capsid protein VP0. Interacts with capsid protein VP1 and capsid protein VP3 in the mature capsid. As to quaternary structure, interacts with capsid protein VP0 and capsid protein VP1 to form heterotrimeric protomers. Five protomers subsequently associate to form pentamers which serve as building blocks for the capsid. Interacts with capsid protein VP4 in the mature capsid. Interacts with protein 2C; this interaction may be important for virion morphogenesis. In terms of assembly, interacts with capsid protein VP1 and capsid protein VP3. Homodimer. As to quaternary structure, homohexamer; forms a hexameric ring structure with 6-fold symmetry characteristic of AAA+ ATPases. Interacts (via N-terminus) with host RTN3 (via reticulon domain); this interaction is important for viral replication. Interacts with capsid protein VP3; this interaction may be important for virion morphogenesis. In terms of assembly, interacts with protein 3CD. Homodimer. Interacts with host GBF1. Interacts (via GOLD domain) with host ACBD3 (via GOLD domain); this interaction allows the formation of a viral protein 3A/ACBD3 heterotetramer with a 2:2 stoichiometry, which will stimulate the recruitment of host PI4KB in order to synthesize PI4P at the viral RNA replication sites. As to quaternary structure, interacts with RNA-directed RNA polymerase. In terms of assembly, interacts with protein 3AB and with RNA-directed RNA polymerase. Interacts with Viral protein genome-linked and with protein 3CD. Requires Mg(2+) as cofactor. Specific enzymatic cleavages in vivo by the viral proteases yield processing intermediates and the mature proteins. Post-translationally, myristoylation is required for the formation of pentamers during virus assembly. Further assembly of 12 pentamers and a molecule of genomic RNA generates the provirion. In terms of processing, during virion maturation, immature virions are rendered infectious following cleavage of VP0 into VP4 and VP2. This maturation seems to be an autocatalytic event triggered by the presence of RNA in the capsid and it is followed by a conformational change infectious virion. Myristoylation is required during RNA encapsidation and formation of the mature virus particle. Post-translationally, VPg is uridylylated by the polymerase into VPg-pUpU. This acts as a nucleotide-peptide primer for the genomic RNA replication.

Its subcellular location is the virion. It localises to the host cytoplasm. It is found in the host cytoplasmic vesicle membrane. The protein resides in the host nucleus. The enzyme catalyses a ribonucleoside 5'-triphosphate + H2O = a ribonucleoside 5'-diphosphate + phosphate + H(+). It catalyses the reaction Selective cleavage of Tyr-|-Gly bond in the picornavirus polyprotein.. The catalysed reaction is RNA(n) + a ribonucleoside 5'-triphosphate = RNA(n+1) + diphosphate. It carries out the reaction Selective cleavage of Gln-|-Gly bond in the poliovirus polyprotein. In other picornavirus reactions Glu may be substituted for Gln, and Ser or Thr for Gly.. Its activity is regulated as follows. Replication or transcription is subject to high level of random mutations by the nucleotide analog ribavirin. In terms of biological role, forms an icosahedral capsid of pseudo T=3 symmetry with capsid proteins VP2 and VP3. The capsid is 300 Angstroms in diameter, composed of 60 copies of each capsid protein and enclosing the viral positive strand RNA genome. Capsid protein VP1 mainly forms the vertices of the capsid. Capsid protein VP1 interacts with host cell receptor PVR to provide virion attachment to target host cells. This attachment induces virion internalization predominantly through clathrin- and caveolin-independent endocytosis in Hela cells and through caveolin-mediated endocytosis in brain microvascular endothelial cells. Tyrosine kinases are probably involved in the entry process. Virus binding to PVR induces increased junctional permeability and rearrangement of junctional proteins. Modulation of endothelial tight junctions, as well as cytolytic infection of endothelial cells themselves, may result in loss of endothelial integrity which may help the virus to reach the CNS. After binding to its receptor, the capsid undergoes conformational changes. Capsid protein VP1 N-terminus (that contains an amphipathic alpha-helix) and capsid protein VP4 are externalized. Together, they shape a pore in the host membrane through which viral genome is translocated to host cell cytoplasm. Forms an icosahedral capsid of pseudo T=3 symmetry with capsid proteins VP2 and VP3. The capsid is 300 Angstroms in diameter, composed of 60 copies of each capsid protein and enclosing the viral positive strand RNA genome. Functionally, lies on the inner surface of the capsid shell. After binding to the host receptor, the capsid undergoes conformational changes. Capsid protein VP4 is released, Capsid protein VP1 N-terminus is externalized, and together, they shape a pore in the host membrane through which the viral genome is translocated into the host cell cytoplasm. Its function is as follows. Component of immature procapsids, which is cleaved into capsid proteins VP4 and VP2 after maturation. Allows the capsid to remain inactive before the maturation step. In terms of biological role, cysteine protease that cleaves viral polyprotein and specific host proteins. It is responsible for the autocatalytic cleavage between the P1 and P2 regions, which is the first cleavage occurring in the polyprotein. Also cleaves the host translation initiation factor EIF4G1, in order to shut down the capped cellular mRNA translation. Inhibits the host nucleus-cytoplasm protein and RNA trafficking by cleaving host members of the nuclear pores including NUP98, NUP62 and NUP153. Counteracts stress granule formation probably by antagonizing its assembly or promoting its dissassembly. Cleaves and inhibits host IFIH1/MDA5, thereby inhibiting the type-I IFN production and the establishment of the antiviral state. Cleaves and inhibits host MAVS, thereby inhibiting the type-I IFN production and the establishment of the antiviral state. Plays an essential role in the virus replication cycle by acting as a viroporin. Creates a pore in the host endoplasmic reticulum and as a consequence releases Ca2+ in the cytoplasm of infected cell. In turn, high levels of cytoplasmic calcium may trigger membrane trafficking and transport of viral ER-associated proteins to viroplasms, sites of viral genome replication. Functionally, induces and associates with structural rearrangements of intracellular membranes. Displays RNA-binding, nucleotide binding and NTPase activities. May play a role in virion morphogenesis and viral RNA encapsidation by interacting with the capsid protein VP3. Its function is as follows. Localizes the viral replication complex to the surface of membranous vesicles. Together with protein 3CD binds the Cis-Active RNA Element (CRE) which is involved in RNA synthesis initiation. Acts as a cofactor to stimulate the activity of 3D polymerase, maybe through a nucleid acid chaperone activity. In terms of biological role, localizes the viral replication complex to the surface of membranous vesicles. It inhibits host cell endoplasmic reticulum-to-Golgi apparatus transport and causes the disassembly of the Golgi complex, possibly through GBF1 interaction. This would result in depletion of MHC, trail receptors and IFN receptors at the host cell surface. Plays an essential role in viral RNA replication by recruiting ACBD3 and PI4KB at the viral replication sites, thereby allowing the formation of the rearranged membranous structures where viral replication takes place. Acts as a primer for viral RNA replication and remains covalently bound to viral genomic RNA. VPg is uridylylated prior to priming replication into VPg-pUpU. The oriI viral genomic sequence may act as a template for this. The VPg-pUpU is then used as primer on the genomic RNA poly(A) by the RNA-dependent RNA polymerase to replicate the viral genome. During genome replication, the VPg-RNA linkage is removed by the host TDP2, thereby accelerating replication. During the late stage of the replication cycle, host TDP2 is excluded from sites of viral RNA synthesis and encapsidation, allowing for the generation of progeny virions. Functionally, involved in the viral replication complex and viral polypeptide maturation. It exhibits protease activity with a specificity and catalytic efficiency that is different from protease 3C. Protein 3CD lacks polymerase activity. Protein 3CD binds to the 5'UTR of the viral genome. Its function is as follows. Major viral protease that mediates proteolytic processing of the polyprotein. Cleaves host EIF5B, contributing to host translation shutoff. Also cleaves host PABPC1, contributing to host translation shutoff. Cleaves host RIGI and thus contributes to the inhibition of type I interferon production. Cleaves host NLRP1, triggers host N-glycine-mediated degradation of the autoinhibitory NLRP1 N-terminal fragment. Inhibits the integrated stress response (ISR) in the infected cell by cleaving host G3BP1. Stress granule formation is thus inhibited, which allows protein synthesis and viral replication. In terms of biological role, replicates the viral genomic RNA on the surface of intracellular membranes. May form linear arrays of subunits that propagate along a strong head-to-tail interaction called interface-I. Covalently attaches UMP to a tyrosine of VPg, which is used to prime RNA synthesis. The positive stranded RNA genome is first replicated at virus induced membranous vesicles, creating a dsRNA genomic replication form. This dsRNA is then used as template to synthesize positive stranded RNA genomes. ss(+)RNA genomes are either translated, replicated or encapsidated. This chain is Genome polyprotein, found in Poliovirus type 3 (strains P3/Leon/37 and P3/Leon 12A[1]B).